The primary structure comprises 883 residues: Alanine--tRNA ligase (883 aa).

4 residues coordinate Zn(2+): histidine 570, histidine 574, cysteine 672, and histidine 676.

It belongs to the class-II aminoacyl-tRNA synthetase family. Zn(2+) serves as cofactor.

Its subcellular location is the cytoplasm. It catalyses the reaction tRNA(Ala) + L-alanine + ATP = L-alanyl-tRNA(Ala) + AMP + diphosphate. Functionally, catalyzes the attachment of alanine to tRNA(Ala) in a two-step reaction: alanine is first activated by ATP to form Ala-AMP and then transferred to the acceptor end of tRNA(Ala). Also edits incorrectly charged Ser-tRNA(Ala) and Gly-tRNA(Ala) via its editing domain. This Heliobacterium modesticaldum (strain ATCC 51547 / Ice1) protein is Alanine--tRNA ligase.